Consider the following 308-residue polypeptide: 1D-myo-inositol 2-acetamido-2-deoxy-alpha-D-glucopyranoside deacetylase (308 aa).

The Zn(2+) site is built by His37, Asp40, and His171.

It belongs to the MshB deacetylase family. It depends on Zn(2+) as a cofactor.

It carries out the reaction 1D-myo-inositol 2-acetamido-2-deoxy-alpha-D-glucopyranoside + H2O = 1D-myo-inositol 2-amino-2-deoxy-alpha-D-glucopyranoside + acetate. Catalyzes the deacetylation of 1D-myo-inositol 2-acetamido-2-deoxy-alpha-D-glucopyranoside (GlcNAc-Ins) in the mycothiol biosynthesis pathway. The chain is 1D-myo-inositol 2-acetamido-2-deoxy-alpha-D-glucopyranoside deacetylase from Mycobacterium sp. (strain KMS).